The following is a 232-amino-acid chain: dTTP/UTP pyrophosphatase (232 aa).

Catalysis depends on Asp-103, which acts as the Proton acceptor.

Belongs to the Maf family. YhdE subfamily. A divalent metal cation is required as a cofactor.

The protein resides in the cytoplasm. The enzyme catalyses dTTP + H2O = dTMP + diphosphate + H(+). It carries out the reaction UTP + H2O = UMP + diphosphate + H(+). It catalyses the reaction 5-methyl-UTP + H2O = 5-methyl-UMP + diphosphate + H(+). The catalysed reaction is psi-UTP + H2O = psi-UMP + diphosphate + H(+). Functionally, nucleoside triphosphate pyrophosphatase that hydrolyzes dTTP and UTP. Can also hydrolyze the modified nucleotides 5-methyl-UTP (m(5)UTP) and pseudo-UTP. Has weak activity with CTP. May have a dual role in cell division arrest and in preventing the incorporation of modified nucleotides into cellular nucleic acids. In Saccharomyces cerevisiae (strain ATCC 204508 / S288c) (Baker's yeast), this protein is dTTP/UTP pyrophosphatase.